The primary structure comprises 563 residues: Lengsin (563 aa).

Positions 1-115 (MTDEGDLAQE…PNTDPTRYNA (115 aa)) are disordered. Residues 26–37 (SKLRRARRKVTK) are compositionally biased toward basic residues. Polar residues-rich tracts occupy residues 51 to 62 (ANSSEMSRNQIA) and 105 to 115 (SPNTDPTRYNA). Residues 137–231 (NHLQFVRFEA…VICDTFTVTG (95 aa)) enclose the GS beta-grasp domain. The 326-residue stretch at 238 to 563 (PRYIAKRQLR…EGNKFLEYFI (326 aa)) folds into the GS catalytic domain.

This sequence belongs to the glutamine synthetase family. Dodecamer. Interacts with BFSP2 and VIM. In terms of tissue distribution, expressed in lens.

Functionally, may act as a component of the cytoskeleton or as a chaperone for the reorganization of intermediate filament proteins during terminal differentiation in the lens. Does not seem to have enzymatic activity. This chain is Lengsin (Lgsn), found in Mus musculus (Mouse).